We begin with the raw amino-acid sequence, 454 residues long: Cobyrinate a,c-diamide synthase (454 aa).

A GATase cobBQ-type domain is found at 247–442 (KIGIAMDSAF…IHAHWASNPN (196 aa)). Residue cysteine 329 is the Nucleophile of the active site.

Belongs to the CobB/CbiA family. It depends on Mg(2+) as a cofactor.

It catalyses the reaction cob(II)yrinate + 2 L-glutamine + 2 ATP + 2 H2O = cob(II)yrinate a,c diamide + 2 L-glutamate + 2 ADP + 2 phosphate + 2 H(+). It functions in the pathway cofactor biosynthesis; adenosylcobalamin biosynthesis; cob(II)yrinate a,c-diamide from sirohydrochlorin (anaerobic route): step 10/10. Catalyzes the ATP-dependent amidation of the two carboxylate groups at positions a and c of cobyrinate, using either L-glutamine or ammonia as the nitrogen source. This Leptospira interrogans serogroup Icterohaemorrhagiae serovar copenhageni (strain Fiocruz L1-130) protein is Cobyrinate a,c-diamide synthase.